Reading from the N-terminus, the 69-residue chain is uncharacterized protein (69 aa).

2 4Fe-4S ferredoxin-type domains span residues 2–30 (KIEI…KSKK) and 38–67 (PPIP…IELS). [4Fe-4S] cluster-binding residues include cysteine 10, cysteine 13, cysteine 16, cysteine 20, cysteine 47, cysteine 50, cysteine 53, and cysteine 57.

Requires [4Fe-4S] cluster as cofactor.

This is an uncharacterized protein from Methanocaldococcus jannaschii (strain ATCC 43067 / DSM 2661 / JAL-1 / JCM 10045 / NBRC 100440) (Methanococcus jannaschii).